We begin with the raw amino-acid sequence, 154 residues long: Egg-lysin (154 aa).

Positions 1 to 18 (MKLLVLCIFAMMATLAMS) are cleaved as a signal peptide.

Homodimer. In terms of tissue distribution, sperm.

Dissolves the egg vitelline layer nonenzymatically during fertilization. It creates a hole of about 3 mu-m in diameter through which the sperm pass. The sequence is that of Egg-lysin from Haliotis sorenseni (White abalone).